Consider the following 447-residue polypeptide: tRNA(Ile)-lysidine synthase (447 aa).

31 to 36 (SGGMDS) lines the ATP pocket.

The protein belongs to the tRNA(Ile)-lysidine synthase family.

The protein resides in the cytoplasm. The enzyme catalyses cytidine(34) in tRNA(Ile2) + L-lysine + ATP = lysidine(34) in tRNA(Ile2) + AMP + diphosphate + H(+). Its function is as follows. Ligates lysine onto the cytidine present at position 34 of the AUA codon-specific tRNA(Ile) that contains the anticodon CAU, in an ATP-dependent manner. Cytidine is converted to lysidine, thus changing the amino acid specificity of the tRNA from methionine to isoleucine. This Pseudothermotoga lettingae (strain ATCC BAA-301 / DSM 14385 / NBRC 107922 / TMO) (Thermotoga lettingae) protein is tRNA(Ile)-lysidine synthase.